We begin with the raw amino-acid sequence, 214 residues long: ATP phosphoribosyltransferase (214 aa).

This sequence belongs to the ATP phosphoribosyltransferase family. Short subfamily. As to quaternary structure, heteromultimer composed of HisG and HisZ subunits.

The protein resides in the cytoplasm. The enzyme catalyses 1-(5-phospho-beta-D-ribosyl)-ATP + diphosphate = 5-phospho-alpha-D-ribose 1-diphosphate + ATP. It functions in the pathway amino-acid biosynthesis; L-histidine biosynthesis; L-histidine from 5-phospho-alpha-D-ribose 1-diphosphate: step 1/9. In terms of biological role, catalyzes the condensation of ATP and 5-phosphoribose 1-diphosphate to form N'-(5'-phosphoribosyl)-ATP (PR-ATP). Has a crucial role in the pathway because the rate of histidine biosynthesis seems to be controlled primarily by regulation of HisG enzymatic activity. In Marinomonas sp. (strain MWYL1), this protein is ATP phosphoribosyltransferase.